The sequence spans 315 residues: Probable cell division protein kinase ECU11_1290 (315 aa).

In terms of domain architecture, Protein kinase spans 13–294 (YEKVCRISSG…ASQGLCSGFV (282 aa)). ATP-binding positions include 19–27 (ISSGSFGNV) and Lys42. Residue Asp138 is the Proton acceptor of the active site.

The protein belongs to the protein kinase superfamily. CMGC Ser/Thr protein kinase family. CDC2/CDKX subfamily.

The protein resides in the nucleus. The catalysed reaction is L-seryl-[protein] + ATP = O-phospho-L-seryl-[protein] + ADP + H(+). It catalyses the reaction L-threonyl-[protein] + ATP = O-phospho-L-threonyl-[protein] + ADP + H(+). May play a role in the control of the eukaryotic cell cycle. The polypeptide is Probable cell division protein kinase ECU11_1290 (Encephalitozoon cuniculi (strain GB-M1) (Microsporidian parasite)).